Here is a 236-residue protein sequence, read N- to C-terminus: UPF0257 lipoprotein YnfC (236 aa).

The first 16 residues, 1-16 (MKKPLLLTLLCMILAG), serve as a signal peptide directing secretion. The N-palmitoyl cysteine moiety is linked to residue Cys-17. Residue Cys-17 is the site of S-diacylglycerol cysteine attachment.

Belongs to the UPF0257 family.

It is found in the cell membrane. This chain is UPF0257 lipoprotein YnfC, found in Salmonella dublin (strain CT_02021853).